A 616-amino-acid chain; its full sequence is UvrABC system protein C (616 aa).

Residues 21-100 enclose the GIY-YIG domain; the sequence is TCPGVYQFKN…IKDLKPRYNI (80 aa). In terms of domain architecture, UVR spans 214–249; the sequence is GALIRTLSAEMHRYADELRFEEAAELKIQIEGLRKY.

It belongs to the UvrC family. Interacts with UvrB in an incision complex.

The protein localises to the cytoplasm. Its function is as follows. The UvrABC repair system catalyzes the recognition and processing of DNA lesions. UvrC both incises the 5' and 3' sides of the lesion. The N-terminal half is responsible for the 3' incision and the C-terminal half is responsible for the 5' incision. The protein is UvrABC system protein C of Prosthecochloris aestuarii (strain DSM 271 / SK 413).